Here is a 356-residue protein sequence, read N- to C-terminus: Histidinol-phosphate aminotransferase (356 aa).

Residue K210 is modified to N6-(pyridoxal phosphate)lysine.

The protein belongs to the class-II pyridoxal-phosphate-dependent aminotransferase family. Histidinol-phosphate aminotransferase subfamily. Homodimer. The cofactor is pyridoxal 5'-phosphate.

The catalysed reaction is L-histidinol phosphate + 2-oxoglutarate = 3-(imidazol-4-yl)-2-oxopropyl phosphate + L-glutamate. Its pathway is amino-acid biosynthesis; L-histidine biosynthesis; L-histidine from 5-phospho-alpha-D-ribose 1-diphosphate: step 7/9. The polypeptide is Histidinol-phosphate aminotransferase (Gluconacetobacter diazotrophicus (strain ATCC 49037 / DSM 5601 / CCUG 37298 / CIP 103539 / LMG 7603 / PAl5)).